A 200-amino-acid chain; its full sequence is NADH-quinone oxidoreductase chain 10 (200 aa).

The next 5 membrane-spanning stretches (helical) occupy residues 2–22 (MTFAFYLFAISACVAGFMVVI), 26–46 (PVHSVLWLILAFLSAAGLFVL), 51–71 (FVAMLLVVVYVGAVAVLFLFV), 90–110 (LPLALVIGVVLLAQLGIAFSG), and 144–164 (VLMFQLAGLVLLVAMIGAIVL).

This sequence belongs to the complex I subunit 6 family. As to quaternary structure, NDH-1 is composed of at least 14 different subunits, Nqo1 to Nqo14. The complex has a L-shaped structure, with the hydrophobic arm (subunits Nqo7, Nqo8, Nqo10 to Nqo14) embedded in the inner membrane and the hydrophilic peripheral arm (subunits Nqo1 to Nqo6, Nqo9) protruding into the bacterial cytoplasm. The hydrophilic domain contains all the redox centers.

Its subcellular location is the cell inner membrane. It carries out the reaction a quinone + NADH + 5 H(+)(in) = a quinol + NAD(+) + 4 H(+)(out). In terms of biological role, NDH-1 shuttles electrons from NADH, via FMN and iron-sulfur (Fe-S) centers, to quinones in the respiratory chain. The immediate electron acceptor for the enzyme in this species is believed to be ubiquinone. Couples the redox reaction to proton translocation (for every two electrons transferred, four hydrogen ions are translocated across the cytoplasmic membrane), and thus conserves the redox energy in a proton gradient. The chain is NADH-quinone oxidoreductase chain 10 from Paracoccus denitrificans.